Here is a 124-residue protein sequence, read N- to C-terminus: Small ribosomal subunit protein uS11 (124 aa).

The disordered stretch occupies residues 102–124; sequence RIGRIEDATPIPHDGTTPKRKNR.

The protein belongs to the universal ribosomal protein uS11 family. As to quaternary structure, part of the 30S ribosomal subunit.

In terms of biological role, located on the platform of the 30S subunit. This is Small ribosomal subunit protein uS11 from Methanococcus maripaludis (strain C5 / ATCC BAA-1333).